Consider the following 467-residue polypeptide: Asparagine--tRNA ligase (467 aa).

It belongs to the class-II aminoacyl-tRNA synthetase family. Homodimer.

The protein resides in the cytoplasm. It carries out the reaction tRNA(Asn) + L-asparagine + ATP = L-asparaginyl-tRNA(Asn) + AMP + diphosphate + H(+). The polypeptide is Asparagine--tRNA ligase (Histophilus somni (strain 2336) (Haemophilus somnus)).